The following is a 119-amino-acid chain: Ribonuclease P protein component (119 aa).

It belongs to the RnpA family. Consists of a catalytic RNA component (M1 or rnpB) and a protein subunit.

It carries out the reaction Endonucleolytic cleavage of RNA, removing 5'-extranucleotides from tRNA precursor.. RNaseP catalyzes the removal of the 5'-leader sequence from pre-tRNA to produce the mature 5'-terminus. It can also cleave other RNA substrates such as 4.5S RNA. The protein component plays an auxiliary but essential role in vivo by binding to the 5'-leader sequence and broadening the substrate specificity of the ribozyme. The polypeptide is Ribonuclease P protein component (Pasteurella multocida (strain Pm70)).